The following is a 260-amino-acid chain: Malonyl-[acyl-carrier protein] O-methyltransferase (260 aa).

It belongs to the methyltransferase superfamily.

It catalyses the reaction malonyl-[ACP] + S-adenosyl-L-methionine = malonyl-[ACP] methyl ester + S-adenosyl-L-homocysteine. It functions in the pathway cofactor biosynthesis; biotin biosynthesis. In terms of biological role, converts the free carboxyl group of a malonyl-thioester to its methyl ester by transfer of a methyl group from S-adenosyl-L-methionine (SAM). It allows to synthesize pimeloyl-ACP via the fatty acid synthetic pathway. This chain is Malonyl-[acyl-carrier protein] O-methyltransferase, found in Chlorobium phaeovibrioides (strain DSM 265 / 1930) (Prosthecochloris vibrioformis (strain DSM 265)).